Consider the following 31-residue polypeptide: Toxin BmKK16 (31 aa).

Q1 carries the post-translational modification Pyrrolidone carboxylic acid. 3 disulfides stabilise this stretch: C4–C20, C10–C25, and C14–C27. P31 is modified (proline amide).

This sequence belongs to the short scorpion toxin superfamily. Potassium channel inhibitor family. Alpha-KTx 17 subfamily. In terms of processing, the N-terminus is blocked. In terms of tissue distribution, expressed by the venom gland.

Its subcellular location is the secreted. Functionally, blocker of potassium channels (Kv). The protein is Toxin BmKK16 of Olivierus martensii (Manchurian scorpion).